We begin with the raw amino-acid sequence, 661 residues long: DNA cross-link repair protein PSO2/SNM1 (661 aa).

The tract at residues 1–44 (MSRKSIVQIRRSEVKRKRSSTASSTSEGKTLHKNTHTSSKRQRT) is disordered. Basic residues predominate over residues 31–43 (LHKNTHTSSKRQR). The segment at 144 to 174 (VIQCPICLENLSHLELYERETHCDTCIGSDP) adopts a UBZ4-type zinc-finger fold. Zn(2+) is bound by residues C147, C150, H165, and C169.

Belongs to the DNA repair metallo-beta-lactamase (DRMBL) family.

The protein resides in the nucleus. Required for DNA interstrand cross-link repair. This requires cleavage of cross-linked DNA to generate DNA double strand breaks (DSBs). This protein has 5' exonuclease activity on single-stranded and double-stranded DNA, which appears to be necessary for the processing of DNA double strand breaks prior to ligation. The protein is DNA cross-link repair protein PSO2/SNM1 (PSO2) of Saccharomyces cerevisiae (strain ATCC 204508 / S288c) (Baker's yeast).